Here is a 152-residue protein sequence, read N- to C-terminus: Deoxyuridine 5'-triphosphate nucleotidohydrolase (152 aa).

Substrate is bound by residues 71–73, Asn84, 88–90, and Met98; these read RSG and LID.

Belongs to the dUTPase family. Requires Mg(2+) as cofactor.

It catalyses the reaction dUTP + H2O = dUMP + diphosphate + H(+). It participates in pyrimidine metabolism; dUMP biosynthesis; dUMP from dCTP (dUTP route): step 2/2. In terms of biological role, this enzyme is involved in nucleotide metabolism: it produces dUMP, the immediate precursor of thymidine nucleotides and it decreases the intracellular concentration of dUTP so that uracil cannot be incorporated into DNA. This is Deoxyuridine 5'-triphosphate nucleotidohydrolase from Shewanella amazonensis (strain ATCC BAA-1098 / SB2B).